The primary structure comprises 313 residues: Ribosomal RNA small subunit methyltransferase H (313 aa).

Residues 35 to 37 (GGH), D55, F80, D102, and Q109 each bind S-adenosyl-L-methionine.

It belongs to the methyltransferase superfamily. RsmH family.

Its subcellular location is the cytoplasm. It carries out the reaction cytidine(1402) in 16S rRNA + S-adenosyl-L-methionine = N(4)-methylcytidine(1402) in 16S rRNA + S-adenosyl-L-homocysteine + H(+). Functionally, specifically methylates the N4 position of cytidine in position 1402 (C1402) of 16S rRNA. The chain is Ribosomal RNA small subunit methyltransferase H from Shewanella oneidensis (strain ATCC 700550 / JCM 31522 / CIP 106686 / LMG 19005 / NCIMB 14063 / MR-1).